Reading from the N-terminus, the 406-residue chain is DNA primase large subunit PriL (406 aa).

[4Fe-4S] cluster-binding residues include Cys302, Cys375, Cys384, and Cys389.

This sequence belongs to the eukaryotic-type primase large subunit family. Heterodimer of a small subunit (PriS) and a large subunit (PriL). [4Fe-4S] cluster is required as a cofactor.

Functionally, regulatory subunit of DNA primase, an RNA polymerase that catalyzes the synthesis of short RNA molecules used as primers for DNA polymerase during DNA replication. Stabilizes and modulates the activity of the small subunit, increasing the rate of DNA synthesis, and conferring RNA synthesis capability. The DNA polymerase activity may enable DNA primase to also catalyze primer extension after primer synthesis. May also play a role in DNA repair. In Methanopyrus kandleri (strain AV19 / DSM 6324 / JCM 9639 / NBRC 100938), this protein is DNA primase large subunit PriL.